A 334-amino-acid polypeptide reads, in one-letter code: NAD-dependent protein deacetylase sirtuin-3 (334 aa).

Positions 53 to 315 (SSEKKFSLQD…ERLVDLLGWT (263 aa)) constitute a Deacetylase sirtuin-type domain. Lys57 bears the N6-succinyllysine mark. NAD(+) is bound by residues 80–100 (GAGI…SGLY) and 163–166 (QNID). The active-site Proton acceptor is His183. Residues Cys191, Cys194, Cys215, and Cys218 each contribute to the Zn(2+) site. Residues 254–256 (GTS) and 279–281 (NRD) contribute to the NAD(+) site.

The protein belongs to the sirtuin family. Class I subfamily. In terms of assembly, upon metabolic stress, forms a complex composed of FOXO3, SIRT3 and mitochondrial RNA polymerase POLRMT; the complex is recruited to mtDNA in a SIRT3-dependent manner. Also forms a complex composed of FOXO3, SIRT3, TFAM and POLRMT. Interacts with NDUFA9, ACSS1, IDH2 and GDH. Interacts with PCCA. The cofactor is Zn(2+). Expressed in cardiomyocytes (at protein level). Expressed in the brain, liver, kidney and testes. Expressed in skeletal muscles (at protein level).

It is found in the mitochondrion matrix. The protein localises to the cytoplasm. The enzyme catalyses N(6)-acetyl-L-lysyl-[protein] + NAD(+) + H2O = 2''-O-acetyl-ADP-D-ribose + nicotinamide + L-lysyl-[protein]. The catalysed reaction is N(6)-[(S)-lactoyl]-L-lysyl-[protein] + NAD(+) + H2O = 2''-O-(S)-lactoyl-ADP-D-ribose + nicotinamide + L-lysyl-[protein]. Functionally, NAD-dependent protein deacetylase. Activates or deactivates mitochondrial target proteins by deacetylating key lysine residues. Known targets include ACSS1, IDH, GDH, PDHA1, SOD2, LCAD, SDHA, MRPL12 and the ATP synthase subunit ATP5PO. Contributes to the regulation of the cellular energy metabolism. Important for regulating tissue-specific ATP levels. In response to metabolic stress, deacetylates transcription factor FOXO3 and recruits FOXO3 and mitochondrial RNA polymerase POLRMT to mtDNA to promote mtDNA transcription. Acts as a regulator of ceramide metabolism by mediating deacetylation of ceramide synthases CERS1, CERS2 and CERS6, thereby increasing their activity and promoting mitochondrial ceramide accumulation. Regulates hepatic lipogenesis. Uses NAD(+) substrate imported by SLC25A47, triggering downstream activation of PRKAA1/AMPK-alpha signaling cascade that ultimately downregulates sterol regulatory element-binding protein (SREBP) transcriptional activities and ATP-consuming lipogenesis to restore cellular energy balance. In addition to protein deacetylase activity, also acts as a protein-lysine deacylase by mediating delactylation of proteins, such as CCNE2 and 'Lys-16' of histone H4 (H4K16la). This chain is NAD-dependent protein deacetylase sirtuin-3, found in Mus musculus (Mouse).